The chain runs to 220 residues: Chalcone--flavanone isomerase B (220 aa).

Residues Thr50, Asn115, and Thr192 each coordinate substrate.

It belongs to the chalcone isomerase family.

The enzyme catalyses a chalcone = a flavanone.. It participates in secondary metabolite biosynthesis; flavonoid biosynthesis. Functionally, catalyzes the intramolecular cyclization of bicyclic chalcones into tricyclic (S)-flavanones. Responsible for the isomerization of 4,2',4',6'-tetrahydroxychalcone (also termed chalcone) into naringenin. This chain is Chalcone--flavanone isomerase B (CHI2), found in Petunia hybrida (Petunia).